A 118-amino-acid chain; its full sequence is Small ribosomal subunit protein uS17 (118 aa).

Belongs to the universal ribosomal protein uS17 family. As to quaternary structure, part of the 30S ribosomal subunit.

One of the primary rRNA binding proteins, it binds specifically to the 5'-end of 16S ribosomal RNA. In Methanopyrus kandleri (strain AV19 / DSM 6324 / JCM 9639 / NBRC 100938), this protein is Small ribosomal subunit protein uS17.